The primary structure comprises 161 residues: MQTIEQQITNVIEESLTDMGFELVLVKVKGVNPKVVEILIDSLNGERISVEDCTKASRTISAILDVEDLIEAAYSLEVASSGLERPLVKFENYNRFLEREVKIKLKELLNGKTRYQGKIIKAENNKIYLKCEEQEVLIDYDLIKNANLVLTEEVFKKLLKQ.

Belongs to the RimP family.

It is found in the cytoplasm. Required for maturation of 30S ribosomal subunits. The sequence is that of Ribosome maturation factor RimP from Rickettsia massiliae (strain Mtu5).